Consider the following 189-residue polypeptide: uncharacterized protein (189 aa).

Residues 2–62 (RPTNKRILDA…ALLSQHSSNR (61 aa)) form the HTH tetR-type domain. Positions 25–44 (TTKEIAEKANVSEATIFRNF) form a DNA-binding region, H-T-H motif.

This is an uncharacterized protein from Bacillus subtilis (strain 168).